Here is a 137-residue protein sequence, read N- to C-terminus: Small heat shock protein IbpA (137 aa).

In terms of domain architecture, sHSP spans 28–137 (SQGNGGYPPY…TLKPRRIEIK (110 aa)).

It belongs to the small heat shock protein (HSP20) family. As to quaternary structure, monomer. Forms homomultimers of about 100-150 subunits at optimal growth temperatures. Conformation changes to monomers at high temperatures or high ionic concentrations.

The protein localises to the cytoplasm. Associates with aggregated proteins, together with IbpB, to stabilize and protect them from irreversible denaturation and extensive proteolysis during heat shock and oxidative stress. Aggregated proteins bound to the IbpAB complex are more efficiently refolded and reactivated by the ATP-dependent chaperone systems ClpB and DnaK/DnaJ/GrpE. Its activity is ATP-independent. This chain is Small heat shock protein IbpA, found in Serratia proteamaculans (strain 568).